A 479-amino-acid polypeptide reads, in one-letter code: RAC-gamma serine/threonine-protein kinase (479 aa).

At Ser-2 the chain carries N-acetylserine. The PH domain occupies 5-107; the sequence is TIVKEDWVQK…WTEAIQAVAD (103 aa). Cys-59 and Cys-76 are joined by a disulfide. The Protein kinase domain occupies 148–405; the sequence is FDYLKLLGKG…PKEIMRHSFF (258 aa). Residues 154–162 and Lys-177 each bind ATP; that span reads LGKGTFGKV. Residue Asp-271 is the Proton acceptor of the active site. Cys-293 and Cys-307 are joined by a disulfide. O-linked (GlcNAc) threonine glycosylation is present at Thr-302. Thr-305 bears the Phosphothreonine; by PDPK1 mark. An O-linked (GlcNAc) threonine glycan is attached at Thr-309. The 74-residue stretch at 406–479 folds into the AGC-kinase C-terminal domain; that stretch reads SGVNWQDVYD…QFSYSASGRE (74 aa). The disordered stretch occupies residues 446–479; that stretch reads ITPPEKDDDDGMDCMDNERRPHFPQFSYSASGRE. Phosphothreonine is present on Thr-447. Positions 451 to 460 are enriched in acidic residues; it reads KDDDDGMDCM. Ser-472 is subject to Phosphoserine; by PKC/PRKCZ. O-linked (GlcNAc) serine; alternate glycosylation occurs at Ser-472.

This sequence belongs to the protein kinase superfamily. AGC Ser/Thr protein kinase family. RAC subfamily. Interacts (via PH domain) with TCL1A; this enhances AKT3 phosphorylation and activation. Interacts with TRAF6. Interacts with KCTD20. Interacts with BTBD10. Phosphorylation on Thr-305 and Ser-472 is required for full activity. Phosphorylation of the activation loop at Thr-305 by PDPK1/PDK1 is a prerequisite for full activation. Phosphorylation at Ser-472 by mTORC2 in response to growth factors plays a key role in AKT1 activation by facilitating subsequent phosphorylation of the activation loop by PDPK1/PDK1. Post-translationally, ubiquitinated. When fully phosphorylated and translocated into the nucleus, undergoes 'Lys-48'-polyubiquitination catalyzed by TTC3, leading to its degradation by the proteasome. In terms of processing, O-GlcNAcylation at Thr-302 and Thr-309 inhibits activating phosphorylation at Thr-305 via disrupting the interaction between AKT and PDPK1/PDK1.

The protein localises to the nucleus. Its subcellular location is the cytoplasm. The protein resides in the membrane. It catalyses the reaction L-seryl-[protein] + ATP = O-phospho-L-seryl-[protein] + ADP + H(+). The enzyme catalyses L-threonyl-[protein] + ATP = O-phospho-L-threonyl-[protein] + ADP + H(+). Its activity is regulated as follows. Two specific sites, one in the kinase domain (Thr-305) and the other in the C-terminal regulatory region (Ser-472), need to be phosphorylated for its full activation. IGF-1 leads to the activation of AKT3, which may play a role in regulating cell survival. In terms of biological role, AKT3 is one of 3 closely related serine/threonine-protein kinases (AKT1, AKT2 and AKT3) called the AKT kinase, and which regulate many processes including metabolism, proliferation, cell survival, growth and angiogenesis. This is mediated through serine and/or threonine phosphorylation of a range of downstream substrates. Over 100 substrate candidates have been reported so far, but for most of them, no isoform specificity has been reported. AKT3 is the least studied AKT isoform. It plays an important role in brain development and is crucial for the viability of malignant glioma cells. AKT3 isoform may also be the key molecule in up-regulation and down-regulation of MMP13 via IL13. Required for the coordination of mitochondrial biogenesis with growth factor-induced increases in cellular energy demands. Down-regulation by RNA interference reduces the expression of the phosphorylated form of BAD, resulting in the induction of caspase-dependent apoptosis. The sequence is that of RAC-gamma serine/threonine-protein kinase (Akt3) from Rattus norvegicus (Rat).